A 249-amino-acid polypeptide reads, in one-letter code: Thioesterase TesA (249 aa).

Active-site residues include serine 92, aspartate 196, and histidine 224.

This sequence belongs to the thioesterase family.

The catalysed reaction is a fatty acyl-CoA + H2O = a fatty acid + CoA + H(+). Functionally, involved in the synthesis of both phthiocerol dimycocerosates (PDIMs) and phenolic glycolipids (PGLs), which are structurally related lipids non-covalently bound to the outer cell wall layer of M.tuberculosis and are important virulence factors. The protein is Thioesterase TesA of Mycobacterium marinum (strain ATCC BAA-535 / M).